The primary structure comprises 126 residues: Adenosine 5'-monophosphoramidase HINT1 (126 aa).

An N-acetylalanine modification is found at A2. Residues 18 to 126 form the HIT domain; sequence IFGKIIRKEI…GGRQMHWPPG (109 aa). An N6-acetyllysine mark is found at K21 and K30. AMP is bound at residue 43–44; sequence DI. 2 positions are modified to phosphoserine: S45 and S72. Residues N99, 105 to 107, and 112 to 114 each bind AMP; these read GQS and HLH. A Histidine triad motif motif is present at residues 110 to 114; that stretch reads HVHLH. H112 functions as the Tele-AMP-histidine intermediate in the catalytic mechanism.

This sequence belongs to the HINT family. As to quaternary structure, homodimer. Interacts with CDK7. Interacts with RUVBL1 and RUVBL2 and is associated with the LEF1/TCF1-CTNNB1 complex and with a KAT5 histone acetyltransferase complex. Identified in a complex with MITF and CTNNB1. Interacts with CDC34 and RBX1, and is part of a SCF (SKP2-CUL1-F-box protein) E3 ubiquitin-protein ligase complex. Interacts with SUMO1, SUMO2 and RGS17. Interacts with the Ten-1 ICD form of TENM1. Interacts with CALM1; interaction increases in the presence of calcium ions. In terms of tissue distribution, widely expressed.

The protein resides in the cytoplasm. Its subcellular location is the nucleus. The catalysed reaction is adenosine 5'-phosphoramidate + H2O = AMP + NH4(+). Functionally, exhibits adenosine 5'-monophosphoramidase activity, hydrolyzing purine nucleotide phosphoramidates with a single phosphate group such as adenosine 5'monophosphoramidate (AMP-NH2) to yield AMP and NH2. Hydrolyzes adenosine 5'monophosphomorpholidate (AMP-morpholidate) and guanosine 5'monophosphomorpholidate (GMP-morpholidate). Hydrolyzes lysyl-AMP (AMP-N-epsilon-(N-alpha-acetyl lysine methyl ester)) generated by lysine tRNA ligase, as well as Met-AMP, His-AMP and Asp-AMP, lysyl-GMP (GMP-N-epsilon-(N-alpha-acetyl lysine methyl ester)) and AMP-N-alanine methyl ester. Hydrolyzes 3-indolepropionic acyl-adenylate, tryptamine adenosine phosphoramidate monoester and other fluorogenic purine nucleoside tryptamine phosphoramidates in vitro. Can also convert adenosine 5'-O-phosphorothioate and guanosine 5'-O-phosphorothioate to the corresponding nucleoside 5'-O-phosphates with concomitant release of hydrogen sulfide. In addition, functions as scaffolding protein that modulates transcriptional activation by the LEF1/TCF1-CTNNB1 complex and by the complex formed with MITF and CTNNB1. Modulates p53/TP53 levels and p53/TP53-mediated apoptosis. Modulates proteasomal degradation of target proteins by the SCF (SKP2-CUL1-F-box protein) E3 ubiquitin-protein ligase complex. Also exhibits SUMO-specific isopeptidase activity, deconjugating SUMO1 from RGS17. Deconjugates SUMO1 from RANGAP1. In Homo sapiens (Human), this protein is Adenosine 5'-monophosphoramidase HINT1 (HINT1).